The chain runs to 491 residues: Cobyric acid synthase (491 aa).

The GATase cobBQ-type domain maps to 246-435 (KIDVAVIKLP…IHGIFDGANF (190 aa)). Cys-327 acts as the Nucleophile in catalysis. The active site involves His-427.

It belongs to the CobB/CobQ family. CobQ subfamily.

It participates in cofactor biosynthesis; adenosylcobalamin biosynthesis. Catalyzes amidations at positions B, D, E, and G on adenosylcobyrinic A,C-diamide. NH(2) groups are provided by glutamine, and one molecule of ATP is hydrogenolyzed for each amidation. The protein is Cobyric acid synthase of Clostridium acetobutylicum (strain ATCC 824 / DSM 792 / JCM 1419 / IAM 19013 / LMG 5710 / NBRC 13948 / NRRL B-527 / VKM B-1787 / 2291 / W).